A 659-amino-acid chain; its full sequence is Cytochrome bo(3) ubiquinol oxidase subunit 1 (659 aa).

The Extracellular portion of the chain corresponds to 1-14 (MFGKLTLKAIPVDE). A helical membrane pass occupies residues 15–35 (PIIMVTYISIILIALFISFSI). Topologically, residues 36–58 (TYFKKWKYLWYEWFTTVDHKKIS) are cytoplasmic. The chain crosses the membrane as a helical span at residues 59 to 79 (IMYGILAFIMLFRGFVDAILM). Arg71, Asp75, and His98 together coordinate a ubiquinone. Residues 80-106 (RTQQVIASSGNTGFLPPHHYDQIFTAH) are Extracellular-facing. Position 106 (His106) interacts with heme b. A helical membrane pass occupies residues 107–127 (GVIMIFFVAMPLVIGLMNLVV). The Cytoplasmic portion of the chain corresponds to 128 to 145 (PLQIGARDVAFPFLNNLS). The helical transmembrane segment at 146-166 (FWLNVSGAILLTLSLGIGEFA) threads the bilayer. The Extracellular segment spans residues 167 to 189 (QTGWLAYPPLSEVKYSPGVGVDY). A heme b-binding site is contributed by Trp170. The helical transmembrane segment at 190–210 (WIWSLQISGVGTTLTGINFLI) threads the bilayer. At 211-225 (TILKMRAPGMCFFKM) the chain is on the cytoplasmic side. A helical membrane pass occupies residues 226-246 (PVFTWAALCTNILIVISFPVL). Over 247 to 277 (TTTLLLLTLDRCFDFHFFTNNFGGNPMMYVN) the chain is Extracellular. A helical transmembrane segment spans residues 278 to 298 (LIWIWGHPEVYILVLPVFGVF). His284 is a Cu(2+) binding site. The 1'-histidyl-3'-tyrosine (His-Tyr) cross-link spans 284–288 (HPEVY). Fe(II)-heme o is bound at residue Tyr288. Topologically, residues 299 to 309 (SEVVATFSKKR) are cytoplasmic. The chain crosses the membrane as a helical span at residues 310-330 (LFGYVSLVWATLAITILSFIV). Over 331–347 (WLHHFFTMGAGSNVNAF) the chain is Extracellular. Cu(2+) is bound by residues His333 and His334. A helical membrane pass occupies residues 348–368 (FGITTMIIAIPTGVKIFNWLF). Residues 369–380 (TMYQGRVHMHSS) lie on the Cytoplasmic side of the membrane. Residues 381-401 (MLWTIGFLITFSIGGMTGVLL) traverse the membrane as a helical segment. Over 402-413 (SIPPADFILHNS) the chain is Extracellular. Residues His411 and His419 each contribute to the Fe(II)-heme o site. A helical membrane pass occupies residues 414–434 (LFLVAHFHNVIIGGVVFGCFA). His421 is a binding site for heme b. Residues 435 to 456 (GINYWFPKLFGFILNELWGKRA) are Cytoplasmic-facing. Residues 457–477 (FWFWIIGFFTAFMPLYFLGFM) traverse the membrane as a helical segment. Residues 478–490 (GMTRRLSQNIDIE) lie on the Extracellular side of the membrane. Positions 481 and 482 each coordinate heme b. A helical membrane pass occupies residues 491–511 (FHFLLSIAAIGAILIGIGILC). Over 512-580 (QIIQFWVSVR…KNQVQKKQYS (69 aa)) the chain is Cytoplasmic. A helical membrane pass occupies residues 581–601 (AIHMPKNTGLGIFISFFSLLF). Residues 602–605 (GFSA) lie on the Extracellular side of the membrane. The helical transmembrane segment at 606–626 (VWNIIWLSFLSFLVVIISLIF) threads the bilayer. The Cytoplasmic portion of the chain corresponds to 627–659 (KSIDENTEYTVSVKEIESIENRHLENVQKAGLK).

The protein belongs to the heme-copper respiratory oxidase family. As to quaternary structure, the cytochrome bo(3) ubiquinol oxidase complex is a heterooctamer of two A chains, two B chains, two C chains and two D chains. It depends on Cu(2+) as a cofactor. Requires heme b as cofactor. Fe(II)-heme o serves as cofactor.

The protein resides in the cell membrane. It catalyses the reaction 2 a ubiquinol + O2 + n H(+)(in) = 2 a ubiquinone + 2 H2O + n H(+)(out). Cytochrome bo(3) ubiquinol oxidase is the terminal enzyme in the aerobic respiratory chain. Catalyzes the four-electron reduction of O2 to water, using a ubiquinol as a membrane soluble electron donor for molecular oxygen reduction. Has proton pump activity across the membrane in addition to electron transfer, pumping 2 protons/electron and generating a proton motive force. All the redox centers of this enzyme complex are located within the largest subunit, subunit I. Protons are probably pumped via D- and K- channels found in this subunit. The sequence is that of Cytochrome bo(3) ubiquinol oxidase subunit 1 (cyoB) from Buchnera aphidicola subsp. Schizaphis graminum (strain Sg).